A 136-amino-acid chain; its full sequence is uncharacterized protein (136 aa).

This is an uncharacterized protein from Gallus gallus (Chicken).